Reading from the N-terminus, the 344-residue chain is Glyceraldehyde-3-phosphate dehydrogenase (344 aa).

NAD(+) is bound by residues 11–12 and Gly110; that span reads TI. 139–141 provides a ligand contact to D-glyceraldehyde 3-phosphate; that stretch reads SCN. The active-site Nucleophile is the Cys140. Arg169 provides a ligand contact to NAD(+). D-glyceraldehyde 3-phosphate is bound at residue 195-196; it reads HG. Gln302 lines the NAD(+) pocket.

This sequence belongs to the glyceraldehyde-3-phosphate dehydrogenase family. As to quaternary structure, homotetramer.

Its subcellular location is the cytoplasm. It catalyses the reaction D-glyceraldehyde 3-phosphate + phosphate + NADP(+) = (2R)-3-phospho-glyceroyl phosphate + NADPH + H(+). The catalysed reaction is D-glyceraldehyde 3-phosphate + phosphate + NAD(+) = (2R)-3-phospho-glyceroyl phosphate + NADH + H(+). It functions in the pathway carbohydrate degradation; glycolysis; pyruvate from D-glyceraldehyde 3-phosphate: step 1/5. The protein is Glyceraldehyde-3-phosphate dehydrogenase of Pyrobaculum calidifontis (strain DSM 21063 / JCM 11548 / VA1).